A 37-amino-acid polypeptide reads, in one-letter code: Large ribosomal subunit protein bL36 (37 aa).

This sequence belongs to the bacterial ribosomal protein bL36 family.

This is Large ribosomal subunit protein bL36 from Halorhodospira halophila (strain DSM 244 / SL1) (Ectothiorhodospira halophila (strain DSM 244 / SL1)).